A 139-amino-acid polypeptide reads, in one-letter code: Putative pre-16S rRNA nuclease (139 aa).

It belongs to the YqgF nuclease family.

The protein localises to the cytoplasm. Functionally, could be a nuclease involved in processing of the 5'-end of pre-16S rRNA. This is Putative pre-16S rRNA nuclease from Legionella pneumophila (strain Paris).